The chain runs to 45 residues: Large ribosomal subunit protein bL34 (45 aa).

Residues 22-45 form a disordered region; the sequence is RMRTKSGQNVIKARRRKGRARLTV. Over residues 33–45 the composition is skewed to basic residues; that stretch reads KARRRKGRARLTV.

The protein belongs to the bacterial ribosomal protein bL34 family.

The protein is Large ribosomal subunit protein bL34 of Thermosynechococcus vestitus (strain NIES-2133 / IAM M-273 / BP-1).